We begin with the raw amino-acid sequence, 636 residues long: Threonine--tRNA ligase (636 aa).

The 63-residue stretch at 1–63 (MINITTSFPN…SKDGSVDPVT (63 aa)) folds into the TGS domain. The tract at residues 244 to 535 (DHRKIAKDLG…LIEHYAGNIP (292 aa)) is catalytic. 3 residues coordinate Zn(2+): C335, H386, and H512.

It belongs to the class-II aminoacyl-tRNA synthetase family. Homodimer. Zn(2+) is required as a cofactor.

It is found in the cytoplasm. The catalysed reaction is tRNA(Thr) + L-threonine + ATP = L-threonyl-tRNA(Thr) + AMP + diphosphate + H(+). Functionally, catalyzes the attachment of threonine to tRNA(Thr) in a two-step reaction: L-threonine is first activated by ATP to form Thr-AMP and then transferred to the acceptor end of tRNA(Thr). Also edits incorrectly charged L-seryl-tRNA(Thr). The chain is Threonine--tRNA ligase from Anaplasma marginale (strain Florida).